The chain runs to 487 residues: uncharacterized protein (487 aa).

The helical transmembrane segment at 7 to 28 (HVISIFETLGAYFINIFYNFLY) threads the bilayer. N-linked (GlcNAc...) asparagine; by host glycans are attached at residues asparagine 73, asparagine 83, and asparagine 195. The stretch at 196–235 (RSLLHQIEELTSEKKSLLADLSTLRKKYEKRQSEYRRLVQ) forms a coiled coil. Residues 294-305 (TSQELTSKSPNN) show a composition bias toward polar residues. The disordered stretch occupies residues 294–324 (TSQELTSKSPNNYPVPHSRTIVSKPSDNYPV). A glycan (N-linked (GlcNAc...) asparagine; by host) is linked at asparagine 462.

The protein belongs to the asfivirus B475L family.

The protein localises to the host membrane. This is an uncharacterized protein from African swine fever virus (isolate Tick/South Africa/Pretoriuskop Pr4/1996) (ASFV).